We begin with the raw amino-acid sequence, 132 residues long: Pro-MCH 1 (132 aa).

The N-terminal stretch at 1 to 24 is a signal peptide; the sequence is MRHYVLSISFAVALFLECYTPSTA. The cysteines at positions 120 and 129 are disulfide-linked.

Belongs to the melanin-concentrating hormone family. In terms of tissue distribution, pituitary gland. Produced in neurons of lateral basal hypothalamus which project both to the brain and to the neural lobe of the pituitary gland from where MCH is released.

Functionally, plays a role in skin pigmentation by antagonizing the action of melanotropin alpha. Induces melanin concentration within the melanophores. May participate in the control of the hypothalamo-pituitary adrenal gland axis by inhibiting the release of ACTH. The sequence is that of Pro-MCH 1 (mch1) from Oncorhynchus keta (Chum salmon).